Consider the following 97-residue polypeptide: Cytochrome c2 iso-2 (97 aa).

Heme c is bound by residues Cys10, Cys13, His14, and Met75.

The protein belongs to the cytochrome c family. Binds 1 heme c group covalently per subunit.

In terms of biological role, cytochrome c2 is found mainly in purple, non-sulfur, photosynthetic bacteria where it functions as the electron donor to the oxidized bacteriochlorophyll in the photophosphorylation pathway. However, it may also have a role in the respiratory chain and is found in some non-photosynthetic bacteria. This is Cytochrome c2 iso-2 from Magnetospirillum molischianum (Rhodospirillum molischianum).